Here is a 93-residue protein sequence, read N- to C-terminus: Putative pterin-4-alpha-carbinolamine dehydratase (93 aa).

This sequence belongs to the pterin-4-alpha-carbinolamine dehydratase family.

It carries out the reaction (4aS,6R)-4a-hydroxy-L-erythro-5,6,7,8-tetrahydrobiopterin = (6R)-L-erythro-6,7-dihydrobiopterin + H2O. The protein is Putative pterin-4-alpha-carbinolamine dehydratase of Nostoc sp. (strain PCC 7120 / SAG 25.82 / UTEX 2576).